Here is a 417-residue protein sequence, read N- to C-terminus: Histidine--tRNA ligase (417 aa).

This sequence belongs to the class-II aminoacyl-tRNA synthetase family. Homodimer.

It localises to the cytoplasm. The catalysed reaction is tRNA(His) + L-histidine + ATP = L-histidyl-tRNA(His) + AMP + diphosphate + H(+). This chain is Histidine--tRNA ligase, found in Oleidesulfovibrio alaskensis (strain ATCC BAA-1058 / DSM 17464 / G20) (Desulfovibrio alaskensis).